We begin with the raw amino-acid sequence, 88 residues long: Small ribosomal subunit protein bS20 (88 aa).

Basic residues predominate over residues 1-12; it reads MANHKSALKRAK. The segment at 1 to 23 is disordered; the sequence is MANHKSALKRAKQNTIKQMRNRS.

It belongs to the bacterial ribosomal protein bS20 family.

In terms of biological role, binds directly to 16S ribosomal RNA. The protein is Small ribosomal subunit protein bS20 of Desulfatibacillum aliphaticivorans.